Reading from the N-terminus, the 290-residue chain is Probable porphobilinogen deaminase (290 aa).

C230 carries the S-(dipyrrolylmethanemethyl)cysteine modification.

Belongs to the HMBS family. Dipyrromethane serves as cofactor.

It catalyses the reaction 4 porphobilinogen + H2O = hydroxymethylbilane + 4 NH4(+). The protein operates within porphyrin-containing compound metabolism; protoporphyrin-IX biosynthesis; coproporphyrinogen-III from 5-aminolevulinate: step 2/4. In terms of biological role, tetrapolymerization of the monopyrrole PBG into the hydroxymethylbilane pre-uroporphyrinogen in several discrete steps. This chain is Probable porphobilinogen deaminase, found in Metallosphaera sedula (strain ATCC 51363 / DSM 5348 / JCM 9185 / NBRC 15509 / TH2).